We begin with the raw amino-acid sequence, 237 residues long: Sulfolipid-1 exporter Sap (237 aa).

6 helical membrane-spanning segments follow: residues 5–25 (VLVLALSVICEPVRIGLVVLM), 38–58 (FLCGGYTMAGGVAMVTLVVLG), 66–86 (FSVAEVQIGTGLIALLIAFAL), 141–161 (VSGLGAALPSANYMGAMAAIL), 171–191 (ALAVVTFNVVAFTVAEVPLVS), and 217–237 (DAALLVAAGGCLMLTLGLSNL).

The protein belongs to the peptidoglycolipid addressing protein (GAP) (TC 2.A.116) family.

It localises to the cell inner membrane. In terms of biological role, required for the transport across the inner membrane of sulfolipid-1 (SL-1), which is a major cell wall lipid of pathogenic mycobacteria. Could also transport SL1278 (2-palmitoyl-3-(C43)-phthioceranyl-alpha, alpha'-D-trehalose-2'-sulfate), which is the precursor of SL-1. May potentiate SL-1 levels and confer specificity for sulfolipids over structurally similar glycolipids. In Mycobacterium tuberculosis (strain ATCC 25618 / H37Rv), this protein is Sulfolipid-1 exporter Sap.